Reading from the N-terminus, the 415-residue chain is Serine hydroxymethyltransferase 3 (415 aa).

(6S)-5,6,7,8-tetrahydrofolate is bound by residues leucine 122 and 126–128; that span reads GHL. Residue lysine 230 is modified to N6-(pyridoxal phosphate)lysine.

Belongs to the SHMT family. Homodimer. Pyridoxal 5'-phosphate serves as cofactor.

It is found in the cytoplasm. The enzyme catalyses (6R)-5,10-methylene-5,6,7,8-tetrahydrofolate + glycine + H2O = (6S)-5,6,7,8-tetrahydrofolate + L-serine. It participates in one-carbon metabolism; tetrahydrofolate interconversion. It functions in the pathway amino-acid biosynthesis; glycine biosynthesis; glycine from L-serine: step 1/1. In terms of biological role, catalyzes the reversible interconversion of serine and glycine with tetrahydrofolate (THF) serving as the one-carbon carrier. This reaction serves as the major source of one-carbon groups required for the biosynthesis of purines, thymidylate, methionine, and other important biomolecules. Also exhibits THF-independent aldolase activity toward beta-hydroxyamino acids, producing glycine and aldehydes, via a retro-aldol mechanism. This chain is Serine hydroxymethyltransferase 3, found in Burkholderia lata (strain ATCC 17760 / DSM 23089 / LMG 22485 / NCIMB 9086 / R18194 / 383).